The primary structure comprises 492 residues: Glutamyl-tRNA(Gln) amidotransferase subunit A (492 aa).

Residues Lys-79 and Ser-154 each act as charge relay system in the active site. The Acyl-ester intermediate role is filled by Ser-178.

The protein belongs to the amidase family. GatA subfamily. Heterotrimer of A, B and C subunits.

It carries out the reaction L-glutamyl-tRNA(Gln) + L-glutamine + ATP + H2O = L-glutaminyl-tRNA(Gln) + L-glutamate + ADP + phosphate + H(+). Functionally, allows the formation of correctly charged Gln-tRNA(Gln) through the transamidation of misacylated Glu-tRNA(Gln) in organisms which lack glutaminyl-tRNA synthetase. The reaction takes place in the presence of glutamine and ATP through an activated gamma-phospho-Glu-tRNA(Gln). The chain is Glutamyl-tRNA(Gln) amidotransferase subunit A from Acinetobacter baumannii (strain ATCC 17978 / DSM 105126 / CIP 53.77 / LMG 1025 / NCDC KC755 / 5377).